Reading from the N-terminus, the 600-residue chain is MIYSGDVQRIEPAPVAGPAPLDVAHLILAGFDRHYALFRYSAQRAKSLFESGDWHGMQRLSRERIEYYDMRVRECATQLDSALRGSDARTADGSRANGSAALSEAQTAFWQAVKQEFVGLLADHRQPECAETFFNSVSCRILHRDYFHNDFLFVRPAIATDYLDSRIPSYRVYYPVAEGLHKSLIRMVADFGLAVPYADLPRDAGPRLASDCQIQVLGSLFFRNTGAYIVGRLINQGTVYPFAVALRRNPAGQVCLDALLLGTDDLSTLFSFTRAYFLVDMETPAAVVNFLASLLPRKPKAELYTMLGLQKQGKTLFYRDFLHHLTHSRDAFDIAPGIRGMVMCVFTLPSYPYVFKLIKDRIDKDGMDHATVRRKYQMVKLHDRVGRMADTWEYSQVALPRSRFAPRLLEELRRLVPSLIEENGDTVVIRHVYIERRMMPLNLYLRHASDPLLEVAVREYGDAIRQLATANIFPGDMLYKNFGVTRLGRVVFYDYDEIQRMTEMNFRAIPPAPNEEAELSSEPWYAVGPNDVFPEEFGRFLLGDPRVRQAFLRHHADLLAPQWWQACRARVAQGRIEEFFPYDTDRRLHPQAAPPPRAAA.

ATP-binding positions include 335–341 (APGIRGM) and K356. Residue D390 is part of the active site.

It belongs to the AceK family.

The protein resides in the cytoplasm. It carries out the reaction L-seryl-[isocitrate dehydrogenase] + ATP = O-phospho-L-seryl-[isocitrate dehydrogenase] + ADP + H(+). Functionally, bifunctional enzyme which can phosphorylate or dephosphorylate isocitrate dehydrogenase (IDH) on a specific serine residue. This is a regulatory mechanism which enables bacteria to bypass the Krebs cycle via the glyoxylate shunt in response to the source of carbon. When bacteria are grown on glucose, IDH is fully active and unphosphorylated, but when grown on acetate or ethanol, the activity of IDH declines drastically concomitant with its phosphorylation. The protein is Isocitrate dehydrogenase kinase/phosphatase of Bordetella parapertussis (strain 12822 / ATCC BAA-587 / NCTC 13253).